Consider the following 566-residue polypeptide: NXPE family member 3 (566 aa).

Residues 1-32 (MEKYFPKYVPFFSLLALSGLLYLLWSITSLES) form the signal peptide. 5 N-linked (GlcNAc...) asparagine glycosylation sites follow: asparagine 64, asparagine 172, asparagine 242, asparagine 303, and asparagine 344.

The protein belongs to the NXPE family.

Its subcellular location is the secreted. This chain is NXPE family member 3 (nxpe3), found in Danio rerio (Zebrafish).